The following is a 430-amino-acid chain: Glutamate-1-semialdehyde 2,1-aminomutase (430 aa).

Position 267 is an N6-(pyridoxal phosphate)lysine (K267).

Belongs to the class-III pyridoxal-phosphate-dependent aminotransferase family. HemL subfamily. In terms of assembly, homodimer. Pyridoxal 5'-phosphate serves as cofactor.

It is found in the cytoplasm. It catalyses the reaction (S)-4-amino-5-oxopentanoate = 5-aminolevulinate. It participates in porphyrin-containing compound metabolism; protoporphyrin-IX biosynthesis; 5-aminolevulinate from L-glutamyl-tRNA(Glu): step 2/2. The polypeptide is Glutamate-1-semialdehyde 2,1-aminomutase (Natranaerobius thermophilus (strain ATCC BAA-1301 / DSM 18059 / JW/NM-WN-LF)).